The chain runs to 660 residues: Kinesin-like protein KIF22 (660 aa).

The interval 1–31 is disordered; that stretch reads MSLRAKTCPQRREMASATSGPGRCVSKGGLG. Residues 38–363 enclose the Kinesin motor domain; the sequence is RVRVAVRLRP…LNFTARSKEV (326 aa). 122-129 provides a ligand contact to ATP; the sequence is GPTGAGKT. Residues 391-418 are disordered; that stretch reads PSEAKKAKGPEEESTGSPESTAAPASAS. A compositionally biased stretch (low complexity) spans 405 to 418; sequence TGSPESTAAPASAS. Phosphoserine occurs at positions 407, 422, and 447. K460 participates in a covalent cross-link: Glycyl lysine isopeptide (Lys-Gly) (interchain with G-Cter in SUMO2). The stretch at 460–505 forms a coiled coil; that stretch reads KRERMVLMKTVEEKNLEIERLKMKQKELEAKVLAQEAPDPREKENT. Disordered stretches follow at residues 493 to 516 and 534 to 567; these read AQEA…ASYS and IQKQ…VEKD. Residues 505–516 show a composition bias toward polar residues; that stretch reads TPTILQPPASYS. A phosphoserine mark is found at S540 and S576.

Belongs to the TRAFAC class myosin-kinesin ATPase superfamily. Kinesin family. In terms of assembly, interacts with FAM83D and SIAH1. In terms of processing, ubiquitinated; mediated by SIAH1 and leading to its subsequent proteasomal degradation.

It localises to the nucleus. The protein localises to the cytoplasm. It is found in the cytoskeleton. Functionally, kinesin family member that is involved in spindle formation and the movements of chromosomes during mitosis and meiosis. Binds to microtubules and to DNA. Plays a role in congression of laterally attached chromosomes in NDC80-depleted cells. The protein is Kinesin-like protein KIF22 (Kif22) of Mus musculus (Mouse).